Consider the following 72-residue polypeptide: Translation initiation factor IF-1 (72 aa).

Positions 1-72 (MSKDDCIEFE…TKGRIIYRMK (72 aa)) constitute an S1-like domain.

Belongs to the IF-1 family. Component of the 30S ribosomal translation pre-initiation complex which assembles on the 30S ribosome in the order IF-2 and IF-3, IF-1 and N-formylmethionyl-tRNA(fMet); mRNA recruitment can occur at any time during PIC assembly.

The protein localises to the cytoplasm. One of the essential components for the initiation of protein synthesis. Stabilizes the binding of IF-2 and IF-3 on the 30S subunit to which N-formylmethionyl-tRNA(fMet) subsequently binds. Helps modulate mRNA selection, yielding the 30S pre-initiation complex (PIC). Upon addition of the 50S ribosomal subunit IF-1, IF-2 and IF-3 are released leaving the mature 70S translation initiation complex. The polypeptide is Translation initiation factor IF-1 (Xylella fastidiosa (strain Temecula1 / ATCC 700964)).